The sequence spans 434 residues: CCA tRNA nucleotidyltransferase 1, mitochondrial (434 aa).

Residues 1–41 (MQSVLYPWHRQVLRCSWSRLCLLKRYLFTMKLQSPEFQSLF) constitute a mitochondrion transit peptide. Positions 64 and 67 each coordinate ATP. Positions 64 and 67 each coordinate CTP. Positions 77 and 79 each coordinate Mg(2+). 5 residues coordinate ATP: Arg151, Asp194, Arg197, Arg200, and Arg203. CTP is bound by residues Arg151, Asp194, Arg197, Arg200, and Arg203. Residue Ser400 is modified to Phosphoserine. Lys402 carries the N6-acetyllysine modification.

This sequence belongs to the tRNA nucleotidyltransferase/poly(A) polymerase family. Monomer, and homodimer. Mg(2+) serves as cofactor.

Its subcellular location is the mitochondrion. The protein localises to the cytoplasm. It localises to the nucleus. The enzyme catalyses a tRNA precursor + 2 CTP + ATP = a tRNA with a 3' CCA end + 3 diphosphate. It catalyses the reaction a tRNA with a 3' CCA end + 2 CTP + ATP = a tRNA with a 3' CCACCA end + 3 diphosphate. Its function is as follows. Nucleotidyltransferase that catalyzes the addition and repair of the essential 3'-terminal CCA sequence in tRNAs, which is necessary for the attachment of amino acids to the 3' terminus of tRNA molecules, using CTP and ATP as substrates. tRNA 3'-terminal CCA addition is required both for tRNA processing and repair. Promotes tRNA repair and recycling downstream of the ribosome-associated quality control (RQC) pathway by mediating addition of the tRNA 3'-terminal CCA following cleavage by ANKZF1 and repair by ELAC1. Also involved in tRNA surveillance by mediating tandem CCA addition to generate a CCACCA at the 3' terminus of unstable tRNAs and tRNA-like transcripts. While stable tRNAs receive only 3'-terminal CCA, unstable tRNAs beginning with GG are marked with CCACCA and rapidly degraded. The structural flexibility of RNA controls the choice between CCA versus CCACCA addition: following the first CCA addition cycle, nucleotide-binding to the active site triggers a clockwise screw motion, producing torque on the RNA. This ejects stable RNAs, whereas unstable RNAs are refolded while bound to the enzyme and subjected to a second CCA catalytic cycle. This chain is CCA tRNA nucleotidyltransferase 1, mitochondrial (Trnt1), found in Mus musculus (Mouse).